A 498-amino-acid chain; its full sequence is ATP synthase subunit beta, chloroplastic (498 aa).

172 to 179 (GGAGVGKT) contributes to the ATP binding site.

This sequence belongs to the ATPase alpha/beta chains family. F-type ATPases have 2 components, CF(1) - the catalytic core - and CF(0) - the membrane proton channel. CF(1) has five subunits: alpha(3), beta(3), gamma(1), delta(1), epsilon(1). CF(0) has four main subunits: a(1), b(1), b'(1) and c(9-12).

The protein resides in the plastid. It is found in the chloroplast thylakoid membrane. It carries out the reaction ATP + H2O + 4 H(+)(in) = ADP + phosphate + 5 H(+)(out). Functionally, produces ATP from ADP in the presence of a proton gradient across the membrane. The catalytic sites are hosted primarily by the beta subunits. The sequence is that of ATP synthase subunit beta, chloroplastic from Galbulimima belgraveana (Northern pigeonberry ash).